A 435-amino-acid polypeptide reads, in one-letter code: ATP-dependent protease ATPase subunit HslU (435 aa).

ATP contacts are provided by residues isoleucine 18, 60–65, aspartate 248, glutamate 313, and arginine 385; that span reads GVGKTE.

This sequence belongs to the ClpX chaperone family. HslU subfamily. In terms of assembly, a double ring-shaped homohexamer of HslV is capped on each side by a ring-shaped HslU homohexamer. The assembly of the HslU/HslV complex is dependent on binding of ATP.

The protein localises to the cytoplasm. ATPase subunit of a proteasome-like degradation complex; this subunit has chaperone activity. The binding of ATP and its subsequent hydrolysis by HslU are essential for unfolding of protein substrates subsequently hydrolyzed by HslV. HslU recognizes the N-terminal part of its protein substrates and unfolds these before they are guided to HslV for hydrolysis. In Rhizobium etli (strain ATCC 51251 / DSM 11541 / JCM 21823 / NBRC 15573 / CFN 42), this protein is ATP-dependent protease ATPase subunit HslU.